We begin with the raw amino-acid sequence, 131 residues long: ATP synthase epsilon chain (131 aa).

It belongs to the ATPase epsilon chain family. As to quaternary structure, F-type ATPases have 2 components, CF(1) - the catalytic core - and CF(0) - the membrane proton channel. CF(1) has five subunits: alpha(3), beta(3), gamma(1), delta(1), epsilon(1). CF(0) has three main subunits: a, b and c.

Its subcellular location is the cell membrane. Its function is as follows. Produces ATP from ADP in the presence of a proton gradient across the membrane. In Bacillus pumilus (strain SAFR-032), this protein is ATP synthase epsilon chain.